The sequence spans 214 residues: Probable nicotinate-nucleotide adenylyltransferase (214 aa).

The protein belongs to the NadD family.

The enzyme catalyses nicotinate beta-D-ribonucleotide + ATP + H(+) = deamido-NAD(+) + diphosphate. It participates in cofactor biosynthesis; NAD(+) biosynthesis; deamido-NAD(+) from nicotinate D-ribonucleotide: step 1/1. Catalyzes the reversible adenylation of nicotinate mononucleotide (NaMN) to nicotinic acid adenine dinucleotide (NaAD). The protein is Probable nicotinate-nucleotide adenylyltransferase of Rubrobacter xylanophilus (strain DSM 9941 / JCM 11954 / NBRC 16129 / PRD-1).